A 323-amino-acid polypeptide reads, in one-letter code: tRNA U34 carboxymethyltransferase (323 aa).

Residues K91, W105, K110, G130, 152 to 154, 181 to 182, M196, Y200, and R315 each bind carboxy-S-adenosyl-L-methionine; these read DPT and IE.

Belongs to the class I-like SAM-binding methyltransferase superfamily. CmoB family. In terms of assembly, homotetramer.

The enzyme catalyses carboxy-S-adenosyl-L-methionine + 5-hydroxyuridine(34) in tRNA = 5-carboxymethoxyuridine(34) in tRNA + S-adenosyl-L-homocysteine + H(+). In terms of biological role, catalyzes carboxymethyl transfer from carboxy-S-adenosyl-L-methionine (Cx-SAM) to 5-hydroxyuridine (ho5U) to form 5-carboxymethoxyuridine (cmo5U) at position 34 in tRNAs. This Salmonella paratyphi A (strain ATCC 9150 / SARB42) protein is tRNA U34 carboxymethyltransferase.